Reading from the N-terminus, the 927-residue chain is Roc-COR-CHAT protease (927 aa).

LRR repeat units follow at residues 38 to 61 (AGQV…TEAQ), 83 to 107 (LPHL…GFRS), 109 to 125 (QQVY…VFEG), and 127 to 151 (CPAL…GFRA). An LRR 5 region spans residues 152 to 170 (LKYIYATNNVLQKITFNRS). 2 LRR repeats span residues 171-194 (MRLL…LSEI) and 195-217 (ETME…IWDR). One can recognise a COR domain in the interval 436-623 (EWLGVKEDLN…ELRWKKGVVL (188 aa)). Active-site residues include H796 and C840.

Functionally, a dedicated protease for gasdermin bGSDM; cleaves the bGSDM precursor, releasing the pore-forming moiety, which integrates into the membrane and triggers cell death. Probably involved in defense against bacteriophages. Expression of bGSDM and this neighboring protease is highly toxic in E.coli. Cells expressing the gene pair stop dividing and lose membrane integrity. Both proteins are required to kill E.coli. The bGSDM recognition site is larger than the 8 residues surrounding the cleavage site; replacement of the endogenous recognition site by the Runella site (NRVLGENM) in a number of other bGSDMs is not sufficient for them to be cleaved. The sequence is that of Roc-COR-CHAT protease from Runella zeae (strain ATCC BAA-293 / DSM 19591 / LMG 21438 / NS12).